Reading from the N-terminus, the 762-residue chain is ATP-dependent RNA helicase DBP10 (762 aa).

2 disordered regions span residues 20 to 50 and 65 to 88; these read SLFA…LLDN and KQQR…SGGF. The span at 41–50 shows a compositional bias: low complexity; it reads DLDFGDLLDN. Residues 66–80 show a composition bias toward polar residues; sequence QQRSSNRKTGSLQSK. Positions 86–114 match the Q motif motif; the sequence is GGFQAMGLNSNLLRAISRKGFSVPTPIQR. Residues 117–289 enclose the Helicase ATP-binding domain; sequence IPLVLERRDV…RAGLQEPSLI (173 aa). 130-137 is a binding site for ATP; it reads ARTGSGKT. Residues 237 to 240 carry the DEAD box motif; that stretch reads DEAD. Disordered stretches follow at residues 333-363, 491-523, and 671-762; these read EGIE…PTEH, MNQP…EESE, and VRNF…RAKR. Residues 334 to 511 enclose the Helicase C-terminal domain; it reads GIEEETDEQQ…SSPEKTNPPG (178 aa). The segment covering 349–362 has biased composition (basic and acidic residues); it reads RDSERRNRKEKPTE. A compositionally biased stretch (acidic residues) spans 511-523; sequence GDDEEAWEDEESE. Gly residues predominate over residues 675–684; the sequence is SGGGPGGAGA. A compositionally biased stretch (basic and acidic residues) spans 692–754; it reads EKAPKDADKF…VQEQKREKNA (63 aa).

The protein belongs to the DEAD box helicase family. DDX54/DBP10 subfamily.

The protein localises to the nucleus. It is found in the nucleolus. The catalysed reaction is ATP + H2O = ADP + phosphate + H(+). ATP-binding RNA helicase involved in the biogenesis of 60S ribosomal subunits and is required for the normal formation of 25S and 5.8S rRNAs. The sequence is that of ATP-dependent RNA helicase DBP10 (DBP10) from Chaetomium globosum (strain ATCC 6205 / CBS 148.51 / DSM 1962 / NBRC 6347 / NRRL 1970) (Soil fungus).